A 248-amino-acid polypeptide reads, in one-letter code: MSSAIYPSLKGKRVVITGGGSGIGAGLTAGFARQGAEVIFLDIADEDSRALEAELAGSPIPPVYKRCDLMNLEAIKAVFAEIGDVDVLVNNAGNDDRHKLADVTGAYWDERINVNLRHMLFCTQAVAPGMKKRGGGAVINFGSISWHLGLEDLVLYETAKAGIEGMTRALARELGPDDIRVTCVVPGNVKTKRQEKWYTPEGEAQIVAAQCLKGRIVPENVAALVLFLASDDASLCTGHEYWIDAGWR.

The NAD(+) site is built by D42, D68, N91, Y156, K160, V189, and T191. Y156 (proton acceptor) is an active-site residue.

The protein belongs to the short-chain dehydrogenases/reductases (SDR) family.

It carries out the reaction D-xylose + NAD(+) = D-xylono-1,5-lactone + NADH + H(+). Its function is as follows. Involved in the degradation of D-xylose. Catalyzes the initial reaction in the xylose utilization pathway by oxydizing D-xylose into D-xylonolactone. Shows some activity with L-arabinose and D-lyxose, but D-xylose is clearly the best substrate. Has no activity with D-ribose, D-glucose, D-galactose or D-mannose. The chain is D-xylose 1-dehydrogenase from Caulobacter vibrioides (strain ATCC 19089 / CIP 103742 / CB 15) (Caulobacter crescentus).